The following is a 323-amino-acid chain: Probable cell division protein WhiA (323 aa).

Positions 275–309 (TLKELGEMLTTGQVSKSGINHRLRKLDQIAERLRS) form a DNA-binding region, H-T-H motif.

The protein belongs to the WhiA family.

Functionally, involved in cell division and chromosome segregation. The chain is Probable cell division protein WhiA from Listeria monocytogenes serotype 4a (strain HCC23).